A 219-amino-acid chain; its full sequence is Interleukin-12 subunit alpha (219 aa).

A signal peptide spans 1–22 (MCPARSLLLVATLVLLDYLSLA). Residues Asn24, Asn93, and Asn107 are each glycosylated (N-linked (GlcNAc...) asparagine). Cystine bridges form between Cys37–Cys110, Cys64–Cys196, and Cys85–Cys123.

This sequence belongs to the IL-6 superfamily. Heterodimer with IL12B; disulfide-linked. This heterodimer is known as interleukin IL-12. Heterodimer with EBI3/IL27B; not disulfide-linked. This heterodimer is known as interleukin IL-35. Interacts with NBR1; this interaction promotes IL-12 secretion.

The protein localises to the secreted. In terms of biological role, heterodimerizes with IL12B to form the IL-12 cytokine or with EBI3/IL27B to form the IL-35 cytokine. IL-12 is primarily produced by professional antigen-presenting cells (APCs) such as B-cells and dendritic cells (DCs) as well as macrophages and granulocytes and regulates T-cell and natural killer-cell responses, induces the production of interferon-gamma (IFN-gamma), favors the differentiation of T-helper 1 (Th1) cells and is an important link between innate resistance and adaptive immunity. Mechanistically, exerts its biological effects through a receptor composed of IL12R1 and IL12R2 subunits. Binding to the receptor results in the rapid tyrosine phosphorylation of a number of cellular substrates including the JAK family kinases TYK2 and JAK2. In turn, recruited STAT4 gets phosphorylated and translocates to the nucleus where it regulates cytokine/growth factor responsive genes. As part of IL-35, plays essential roles in maintaining the immune homeostasis of the liver microenvironment and also functions as an immune-suppressive cytokine. Mediates biological events through unconventional receptors composed of IL12RB2 and gp130/IL6ST heterodimers or homodimers. Signaling requires the transcription factors STAT1 and STAT4, which form a unique heterodimer that binds to distinct DNA sites. This chain is Interleukin-12 subunit alpha (IL12A), found in Macaca mulatta (Rhesus macaque).